The sequence spans 151 residues: Putative pre-16S rRNA nuclease (151 aa).

Belongs to the YqgF nuclease family.

Its subcellular location is the cytoplasm. Functionally, could be a nuclease involved in processing of the 5'-end of pre-16S rRNA. In Paraburkholderia phymatum (strain DSM 17167 / CIP 108236 / LMG 21445 / STM815) (Burkholderia phymatum), this protein is Putative pre-16S rRNA nuclease.